Here is a 125-residue protein sequence, read N- to C-terminus: Holo-[acyl-carrier-protein] synthase (125 aa).

D7 and E56 together coordinate Mg(2+).

The protein belongs to the P-Pant transferase superfamily. AcpS family. Requires Mg(2+) as cofactor.

It localises to the cytoplasm. It carries out the reaction apo-[ACP] + CoA = holo-[ACP] + adenosine 3',5'-bisphosphate + H(+). Its function is as follows. Transfers the 4'-phosphopantetheine moiety from coenzyme A to a Ser of acyl-carrier-protein. The polypeptide is Holo-[acyl-carrier-protein] synthase (Chlamydia muridarum (strain MoPn / Nigg)).